Reading from the N-terminus, the 205-residue chain is Phosphoribosyl-dephospho-CoA transferase (205 aa).

Active-site residues include Asp134 and Asp136.

The protein belongs to the MdcG family.

It catalyses the reaction apo-[malonate decarboxylase ACP] + 2'-(5''-triphospho-alpha-D-ribosyl)-3'-dephospho-CoA = holo-[malonate decarboxylase ACP] + diphosphate. Transfers 2'-(5-triphosphoribosyl)-3'-dephosphocoenzyme-A to the apo-[acyl-carrier-protein] of the malonate decarboxylase to yield holo-[acyl-carrier-protein]. The chain is Phosphoribosyl-dephospho-CoA transferase from Klebsiella pneumoniae (strain 342).